The chain runs to 410 residues: Probable ATP-dependent RNA helicase MG308 (410 aa).

The Helicase ATP-binding domain occupies 26-179 (VFKLWPFQNI…KKQVINTKVI (154 aa)). 39–46 (AETGSGKT) is an ATP binding site. The DEID box signature appears at 126–129 (DEID). The Helicase C-terminal domain occupies 190–357 (LVKHFVVHLN…DLKFLTENNQ (168 aa)).

It belongs to the DEAD box helicase family.

The enzyme catalyses ATP + H2O = ADP + phosphate + H(+). This Mycoplasma genitalium (strain ATCC 33530 / DSM 19775 / NCTC 10195 / G37) (Mycoplasmoides genitalium) protein is Probable ATP-dependent RNA helicase MG308.